Consider the following 245-residue polypeptide: Photosystem II protein PSBS1 (245 aa).

Residues 1-25 (MAMTLSTKAFAQRGVSARKNTVRVY) constitute a chloroplast transit peptide. Transmembrane regions (helical) follow at residues 72–92 (LFVG…EILT), 108–128 (GIEV…AAVL), 185–205 (LGFA…LAQF), and 217–237 (EFGL…EGSG).

This sequence belongs to the ELIP/psbS family.

Its subcellular location is the plastid. The protein resides in the chloroplast thylakoid membrane. Functionally, required for non-photochemical quenching (NPQ), a mechanism that converts and dissipates the harmful excess absorbed light energy into heat and protect the photosynthetic apparatus from photo-oxidative damage. Seems involved in the activation of NPQ, possibly by promoting conformational changes required for activation of LHCSR3-dependent quenching in the antenna of photosystem II (PSII). The sequence is that of Photosystem II protein PSBS1 from Chlamydomonas reinhardtii (Chlamydomonas smithii).